The sequence spans 126 residues: Small ribosomal subunit protein uS11 (126 aa).

Belongs to the universal ribosomal protein uS11 family. As to quaternary structure, part of the 30S ribosomal subunit. Interacts with proteins S7 and S18. Binds to IF-3.

Located on the platform of the 30S subunit, it bridges several disparate RNA helices of the 16S rRNA. Forms part of the Shine-Dalgarno cleft in the 70S ribosome. The sequence is that of Small ribosomal subunit protein uS11 from Desulfotalea psychrophila (strain LSv54 / DSM 12343).